We begin with the raw amino-acid sequence, 1808 residues long: Tenascin (1808 aa).

The N-terminal stretch at 1–22 is a signal peptide; sequence MGLPSQVLACAILGLLYQHASG. The propeptide occupies 23-33; the sequence is GLIKRIIRQKR. An N-linked (GlcNAc...) asparagine glycan is attached at N38. A glycan (O-linked (Xyl...) (chondroitin sulfate) serine) is linked at S72. The stretch at 118–142 forms a coiled coil; sequence DIKDLLSRLEELEGLVSSLREQCAS. N168 and N186 each carry an N-linked (GlcNAc...) asparagine glycan. The EGF-like 1; incomplete domain maps to 176 to 188; sequence CVCEPGWKGPNCS. 13 EGF-like domains span residues 188 to 219, 219 to 250, 250 to 281, 281 to 312, 312 to 343, 343 to 374, 374 to 405, 405 to 436, 436 to 467, 467 to 498, 498 to 529, 529 to 560, and 560 to 591; these read SEPA…EDCS, SQAA…PDCG, GEEL…EDCN, NEPL…EDCG, GELI…EDCG, GELT…DDCS, SQKR…EDCG, GELR…EDCG, GELS…EDCR, and RERS…IDCS. Disulfide bonds link C192/C202, C196/C207, C209/C218, C223/C233, C227/C238, C240/C249, C254/C264, C258/C269, C271/C280, C285/C295, C289/C300, C302/C311, C316/C326, C320/C331, C333/C342, C347/C357, C351/C362, C364/C373, C378/C388, C382/C393, C395/C404, C409/C419, C413/C424, C426/C435, C440/C450, C444/C455, C457/C466, C471/C481, C475/C486, C488/C497, C502/C512, C506/C517, C519/C528, C533/C543, C537/C548, C550/C559, C564/C574, C568/C579, and C581/C590. N-linked (GlcNAc...) asparagine glycosylation is present at N328. Fibronectin type-III domains lie at 595-685, 686-775, 776-866, 867-957, 958-1046, 1047-1138, 1139-1228, 1229-1318, 1319-1408, 1409-1495, and 1496-1584; these read PPTE…LPAP, EGLK…TKLD, APSQ…DLDA, PRNL…TDLD, NPKD…EEEP, ELGN…AHPE, VGEL…EAEP, EVDN…TVVG, SPKG…ALDS, PSGL…TGLD, and APKD…TGLL. N603, N643, N751, and N759 each carry an N-linked (GlcNAc...) asparagine glycan. N-linked (GlcNAc...) asparagine glycosylation is found at N1050, N1090, N1101, N1112, N1153, and N1183. N1416 is a glycosylation site (N-linked (GlcNAc...) asparagine). One can recognise a Fibrinogen C-terminal domain in the interval 1582–1797; that stretch reads GLLYPYPKDC…FAEMKLRPSS (216 aa). Residues N1736 and N1769 are each glycosylated (N-linked (GlcNAc...) asparagine).

Belongs to the tenascin family. In terms of assembly, homohexamer; disulfide-linked. A homotrimer may be formed in the triple coiled-coil region and may be stabilized by disulfide rings at both ends. Two of such half-hexabrachions may be disulfide linked within the central globule. Interacts with CSPG5. As to expression, expressed in the brain.

It is found in the secreted. The protein resides in the extracellular space. The protein localises to the extracellular matrix. In terms of biological role, extracellular matrix protein implicated in guidance of migrating neurons as well as axons during development, synaptic plasticity as well as neuronal regeneration. Ligand for integrins alpha-8/beta-1, alpha-9/beta-1, alpha-V/beta-3 and alpha-V/beta-6. This chain is Tenascin (TNC), found in Gallus gallus (Chicken).